The following is a 109-amino-acid chain: Small ribosomal subunit protein bS16 (109 aa).

Residues alanine 87 to glycine 109 form a disordered region. Basic and acidic residues predominate over residues lysine 100 to glycine 109.

This sequence belongs to the bacterial ribosomal protein bS16 family.

This chain is Small ribosomal subunit protein bS16, found in Rhodospirillum centenum (strain ATCC 51521 / SW).